The sequence spans 247 residues: Probable transcriptional regulatory protein GAU_0635 (247 aa).

It belongs to the TACO1 family.

It is found in the cytoplasm. The chain is Probable transcriptional regulatory protein GAU_0635 from Gemmatimonas aurantiaca (strain DSM 14586 / JCM 11422 / NBRC 100505 / T-27).